Consider the following 310-residue polypeptide: MIIVTGGAGFIGSNIVKALNDKGITDILVVDNLKDGTKFVNLVDLNIADYMDKEDFLIQIMAGEEFGEIEAIFHEGACSSTTEWDGKYMMDNNYQYSKELLHYCLEREIPFLYASSAATYGGRTSDFIESREYEQPLNVYGYSKFLFDEYVRQILPEANSQIVGFRYFNVYGPREGHKGSMASVAFHLNTQLNNGESPKLFEGSDGFKRDFVYVGDVADVNLWFWENGVSGIFNLGTGRAESFQAVADATLAFHKKGSIEYIPFPDKLKGRYQAFTQADLTNLRKAGYDKPFKTVAEGVTEYMAWLNRDA.

Residues 10 to 11 (FI), 31 to 32 (DN), Lys-38, Lys-53, 75 to 79 (EGACS), and Asn-92 contribute to the NADP(+) site. The active-site Proton acceptor is Tyr-140. Position 144 (Lys-144) interacts with NADP(+). Asn-169 is a substrate binding site. 2 residues coordinate NADP(+): Val-170 and Lys-178. The active-site Proton acceptor is Lys-178. Substrate contacts are provided by residues Ser-180, His-187, 201–204 (FEGS), Arg-209, and Tyr-272.

The protein belongs to the NAD(P)-dependent epimerase/dehydratase family. HldD subfamily. As to quaternary structure, homopentamer. NADP(+) is required as a cofactor.

The enzyme catalyses ADP-D-glycero-beta-D-manno-heptose = ADP-L-glycero-beta-D-manno-heptose. The protein operates within nucleotide-sugar biosynthesis; ADP-L-glycero-beta-D-manno-heptose biosynthesis; ADP-L-glycero-beta-D-manno-heptose from D-glycero-beta-D-manno-heptose 7-phosphate: step 4/4. Catalyzes the interconversion between ADP-D-glycero-beta-D-manno-heptose and ADP-L-glycero-beta-D-manno-heptose via an epimerization at carbon 6 of the heptose. In Klebsiella pneumoniae (strain 342), this protein is ADP-L-glycero-D-manno-heptose-6-epimerase.